The primary structure comprises 362 residues: Atypical chemokine receptor 3 (362 aa).

Residues 1–47 (MDVHLFDYAEPGNYSDINWPCNSSDCIVVDTVQCPTMPNKNVLLYTL) are Extracellular-facing. Residues Asn-13 and Asn-22 are each glycosylated (N-linked (GlcNAc...) asparagine). A helical membrane pass occupies residues 48 to 68 (SFIYIFIFVIGMIANSVVVWV). At 69–81 (NIQAKTTGYDTHC) the chain is on the cytoplasmic side. Residues 82 to 102 (YILNLAIADLWVVITIPVWVV) form a helical membrane-spanning segment. Over 103 to 118 (SLVQHNQWPMGELTCK) the chain is Extracellular. A disulfide bridge connects residues Cys-117 and Cys-196. The helical transmembrane segment at 119-139 (ITHLIFSINLFGSIFFLACMS) threads the bilayer. Topologically, residues 140–162 (VDRYLSITYFTGTSSYKKKMVRR) are cytoplasmic. A helical membrane pass occupies residues 163–183 (VVCILVWLLAFFVSLPDTYYL). The Extracellular portion of the chain corresponds to 184–213 (KTVTSASNNETYCRSFYPEHSIKEWLIGME). The helical transmembrane segment at 214–234 (LVSVILGFAVPFTIIAIFYFL) threads the bilayer. The Cytoplasmic segment spans residues 235–252 (LARAMSASGDQEKHSSRK). Residues 253–273 (IIFSYVVVFLVCWLPYHFVVL) traverse the membrane as a helical segment. Residues 274–296 (LDIFSILHYIPFTCQLENVLFTA) lie on the Extracellular side of the membrane. The helical transmembrane segment at 297 to 319 (LHVTQCLSLVHCCVNPVLYSFIN) threads the bilayer. Topologically, residues 320 to 362 (RNYRYELMKAFIFKYSAKTGLTKLIDASRVSETEYSALEQNTK) are cytoplasmic. Residues 324 to 362 (YELMKAFIFKYSAKTGLTKLIDASRVSETEYSALEQNTK) are C-terminal cytoplasmic tail. A phosphoserine mark is found at Ser-347, Ser-350, and Ser-355.

This sequence belongs to the G-protein coupled receptor 1 family. Atypical chemokine receptor subfamily. As to quaternary structure, homodimer. Can form heterodimers with CXCR4; heterodimerization may regulate CXCR4 signaling activity. Interacts with ARRB1 and ARRB2. In terms of processing, the Ser/Thr residues in the C-terminal cytoplasmic tail may be phosphorylated. Ubiquitinated at the Lys residues in its C-terminal cytoplasmic tail and is essential for correct trafficking from and to the cell membrane. Deubiquitinated by CXCL12-stimulation in a reversible manner. As to expression, not detected in blood, liver, lung and heart, but high expression detected in several tumor cell lines (at protein level). Expressed in heart, spleen, kidney, lung, ovary, brain, testis, astrocytes, neutrophils and B-lymphocytes.

The protein resides in the cell membrane. It localises to the early endosome. It is found in the recycling endosome. Its function is as follows. Atypical chemokine receptor that controls chemokine levels and localization via high-affinity chemokine binding that is uncoupled from classic ligand-driven signal transduction cascades, resulting instead in chemokine sequestration, degradation, or transcytosis. Also known as interceptor (internalizing receptor) or chemokine-scavenging receptor or chemokine decoy receptor. Acts as a receptor for chemokines CXCL11 and CXCL12/SDF1. Chemokine binding does not activate G-protein-mediated signal transduction but instead induces beta-arrestin recruitment, leading to ligand internalization and activation of MAPK signaling pathway. Required for regulation of CXCR4 protein levels in migrating interneurons, thereby adapting their chemokine responsiveness. In glioma cells, transduces signals via MEK/ERK pathway, mediating resistance to apoptosis. Promotes cell growth and survival. Not involved in cell migration, adhesion or proliferation of normal hematopoietic progenitors but activated by CXCL11 in malignant hemapoietic cells, leading to phosphorylation of ERK1/2 (MAPK3/MAPK1) and enhanced cell adhesion and migration. Plays a regulatory role in CXCR4-mediated activation of cell surface integrins by CXCL12. Required for heart valve development. Regulates axon guidance in the oculomotor system through the regulation of CXCL12 levels. The polypeptide is Atypical chemokine receptor 3 (Mus musculus (Mouse)).